Reading from the N-terminus, the 544-residue chain is Sialidase (544 aa).

The first 22 residues, 1–22 (MKKAVILFSLFCFLCAIPVVQA), serve as a signal peptide directing secretion. BNR repeat units follow at residues 239-250 (SRSTDGGKTWEK), 318-329 (AKSTDDGKTWSA), and 378-389 (MYSKDGGKNWKM). E399 is an active-site residue. R415 provides a ligand contact to substrate. A BNR 4 repeat occupies 425–436 (AITKDLGKTWTE). R479 contributes to the substrate binding site. A BNR 5 repeat occupies 485–496 (KISLDGGVTWSP).

This sequence belongs to the glycosyl hydrolase 33 family.

It is found in the periplasm. The catalysed reaction is Hydrolysis of alpha-(2-&gt;3)-, alpha-(2-&gt;6)-, alpha-(2-&gt;8)- glycosidic linkages of terminal sialic acid residues in oligosaccharides, glycoproteins, glycolipids, colominic acid and synthetic substrates.. In terms of biological role, sialidases have been suggested to be pathogenic factors in microbial infections. The polypeptide is Sialidase (nanH) (Bacteroides fragilis (strain YCH46)).